The primary structure comprises 210 residues: uncharacterized protein (210 aa).

The first 21 residues, Met1–Ala21, serve as a signal peptide directing secretion.

This is an uncharacterized protein from Archaeoglobus fulgidus (strain ATCC 49558 / DSM 4304 / JCM 9628 / NBRC 100126 / VC-16).